Consider the following 207-residue polypeptide: Outer-membrane lipoprotein LolB (207 aa).

The signal sequence occupies residues 1-21 (MTLPDFRLIRLLPLASLVLTA). C22 carries N-palmitoyl cysteine lipidation. C22 carries S-diacylglycerol cysteine lipidation.

This sequence belongs to the LolB family. As to quaternary structure, monomer.

It is found in the cell outer membrane. Plays a critical role in the incorporation of lipoproteins in the outer membrane after they are released by the LolA protein. The protein is Outer-membrane lipoprotein LolB of Salmonella schwarzengrund (strain CVM19633).